Reading from the N-terminus, the 229-residue chain is Dephospho-CoA kinase domain-containing protein (229 aa).

The DPCK domain occupies 3–207 (LVGLTGGIAS…DCMQFLIIRA (205 aa)). Residue 8–15 (GGIASGKS) participates in ATP binding.

Belongs to the CoaE family.

The polypeptide is Dephospho-CoA kinase domain-containing protein (dcakd) (Danio rerio (Zebrafish)).